The chain runs to 159 residues: 17 kDa surface antigen (159 aa).

The N-terminal stretch at 1–19 (MKLLSKIMIIALATSMLQA) is a signal peptide. The N-palmitoyl cysteine moiety is linked to residue C20. C20 is lipidated: S-diacylglycerol cysteine.

It belongs to the rickettsiale 17 kDa surface antigen family.

It is found in the cell outer membrane. This chain is 17 kDa surface antigen (omp), found in Rickettsia japonica (strain ATCC VR-1363 / YH).